Reading from the N-terminus, the 170-residue chain is Small ribosomal subunit protein bS18c (170 aa).

2 disordered regions span residues 1–59 (MYIS…IGPG) and 151–170 (NLRN…SSDC). 7 repeats span residues 4–10 (SKQPFRK), 11–17 (SKQPFRK), 18–24 (SKQTFHK), 25–31 (SKQPFRK), 32–38 (FKQPFRK), 39–45 (SKQPFRK), and 46–52 (SKQPFRR). The interval 4-52 (SKQPFRKSKQPFRKSKQTFHKSKQPFRKFKQPFRKSKQPFRKSKQPFRR) is 7 X 7 AA tandem repeats. Residues 7–55 (PFRKSKQPFRKSKQTFHKSKQPFRKFKQPFRKSKQPFRKSKQPFRRRSR) are compositionally biased toward basic residues.

The protein belongs to the bacterial ribosomal protein bS18 family. Part of the 30S ribosomal subunit.

Its subcellular location is the plastid. It localises to the chloroplast. This Zea mays (Maize) protein is Small ribosomal subunit protein bS18c (rps18).